The primary structure comprises 180 residues: CASP-like protein 2A3 (180 aa).

Topologically, residues 1 to 13 (MELIYGSTMRKKW) are cytoplasmic. A helical membrane pass occupies residues 14–34 (IEPALRFLPVGLCISALALML). The Extracellular segment spans residues 35–55 (KSKEGNENGILEYKHVGAFRY). Residues 56 to 76 (LAYANGICAAYSVLSTFNSVV) traverse the membrane as a helical segment. The Cytoplasmic segment spans residues 77–85 (PRSCSLSRA). The chain crosses the membrane as a helical span at residues 86–106 (WFVFVFDQAFTYLMLGAGAVV). The Extracellular portion of the chain corresponds to 107–135 (TEVLYLAYKGDEKITWFEICPYYGRFCNR). A helical membrane pass occupies residues 136-156 (VAASLVISFLALLCFIPLSLI). The Cytoplasmic portion of the chain corresponds to 157 to 180 (SAYRVFSKYDPPSLCKKDQITSQS).

This sequence belongs to the Casparian strip membrane proteins (CASP) family. In terms of assembly, homodimer and heterodimers.

It localises to the cell membrane. This Picea sitchensis (Sitka spruce) protein is CASP-like protein 2A3.